The primary structure comprises 632 residues: Pentatricopeptide repeat-containing protein ELI1, chloroplastic (632 aa).

A chloroplast-targeting transit peptide spans Met1–Thr19. 10 PPR repeats span residues Asp94 to Pro128, Asn129 to Ile159, Asp160 to Ser194, Thr196 to Arg221, Asp222 to Lys256, Asp258 to Leu292, Asn293 to Lys323, Asp324 to Ile354, Thr360 to Pro395, and Lys396 to Asp426. The tract at residues Leu431–Glu506 is type E motif. Residues Glu497 to Phe512 are required for function in RNA editing. Positions Asn507–Lys537 are type E(+) motif. Positions Ser538–Trp632 are type DYW motif.

Belongs to the PPR family. PCMP-H subfamily. It depends on Zn(2+) as a cofactor.

It is found in the plastid. The protein resides in the chloroplast. Functionally, plays a major role in single RNA editing events in chloroplasts. Acts as a site-recognition transacting factor involved in the edition of the site 5 of ndhB1 and ndhB2 (ndhB1-5 and ndhB2-5 sites corresponding to cytidine-830), which are plastid-encoded subunits of the NADH-plastoquinone oxidoreductase. May provide the catalytic activity for editing site conversion. The chain is Pentatricopeptide repeat-containing protein ELI1, chloroplastic from Arabidopsis thaliana (Mouse-ear cress).